The following is a 520-amino-acid chain: GMP synthase [glutamine-hydrolyzing] (520 aa).

Positions 9 to 202 (RVLIVDFGSQ…LFNIAGLKGD (194 aa)) constitute a Glutamine amidotransferase type-1 domain. The Nucleophile role is filled by C86. Residues H176 and E178 contribute to the active site. One can recognise a GMPS ATP-PPase domain in the interval 203–395 (WTMAAFRQEM…LGLAPAFVGR (193 aa)). 230-236 (SGGVDSS) serves as a coordination point for ATP.

In terms of assembly, homodimer.

The enzyme catalyses XMP + L-glutamine + ATP + H2O = GMP + L-glutamate + AMP + diphosphate + 2 H(+). The protein operates within purine metabolism; GMP biosynthesis; GMP from XMP (L-Gln route): step 1/1. Functionally, catalyzes the synthesis of GMP from XMP. The sequence is that of GMP synthase [glutamine-hydrolyzing] from Caulobacter vibrioides (strain ATCC 19089 / CIP 103742 / CB 15) (Caulobacter crescentus).